Reading from the N-terminus, the 310-residue chain is 4-hydroxythreonine-4-phosphate dehydrogenase (310 aa).

Thr-129 is a binding site for substrate. 3 residues coordinate a divalent metal cation: His-158, His-202, and His-250. Positions 258, 267, and 276 each coordinate substrate.

The protein belongs to the PdxA family. Homodimer. A divalent metal cation serves as cofactor.

The protein localises to the cytoplasm. It catalyses the reaction 4-(phosphooxy)-L-threonine + NAD(+) = 3-amino-2-oxopropyl phosphate + CO2 + NADH. Its pathway is cofactor biosynthesis; pyridoxine 5'-phosphate biosynthesis; pyridoxine 5'-phosphate from D-erythrose 4-phosphate: step 4/5. Catalyzes the NAD(P)-dependent oxidation of 4-(phosphooxy)-L-threonine (HTP) into 2-amino-3-oxo-4-(phosphooxy)butyric acid which spontaneously decarboxylates to form 3-amino-2-oxopropyl phosphate (AHAP). The chain is 4-hydroxythreonine-4-phosphate dehydrogenase from Hydrogenobaculum sp. (strain Y04AAS1).